Here is a 358-residue protein sequence, read N- to C-terminus: MLYHLLYPLAADYKLFNVFKYLTFRSIYAMITALLLAFIVGPWVVRKLEALQARQVIRTDGPESHLKKQGTPTMGGVLILVCIVVPTLLWADLKNVFIWLTLLIIVGYGVLGFVDDYKKVVEKNPKGLSPRQKMFWQVLLAAGVGIFLFYLPGFSTELYLPFFKRVHPELGILFIPFVTLVIVGASNAVNLTDGLDGLAIGPVAINAGTYLLFCYIAGNARLSGYLQIPYVPGAGELAVLCGAMVGAGLGFLWYNSYPAEVFMGDVGSLSLGGALGTLAVLTKQEILLVIVGGVFVVEALSVIFQVGSYKYRGKRIFRMAPIHHHFELKGVAEPKIIVRFWIITIILALVAISTLKMR.

Transmembrane regions (helical) follow at residues 24 to 44, 73 to 93, 95 to 115, 134 to 154, 169 to 189, 197 to 217, 233 to 253, 261 to 281, 286 to 306, and 335 to 355; these read FRSI…GPWV, TMGG…WADL, NVFI…GFVD, MFWQ…LPGF, ELGI…SNAV, GLAI…CYIA, GAGE…GFLW, VFMG…LAVL, ILLV…IFQV, and KIIV…ISTL.

The protein belongs to the glycosyltransferase 4 family. MraY subfamily. Mg(2+) serves as cofactor.

The protein localises to the cell inner membrane. The catalysed reaction is UDP-N-acetyl-alpha-D-muramoyl-L-alanyl-gamma-D-glutamyl-meso-2,6-diaminopimeloyl-D-alanyl-D-alanine + di-trans,octa-cis-undecaprenyl phosphate = di-trans,octa-cis-undecaprenyl diphospho-N-acetyl-alpha-D-muramoyl-L-alanyl-D-glutamyl-meso-2,6-diaminopimeloyl-D-alanyl-D-alanine + UMP. The protein operates within cell wall biogenesis; peptidoglycan biosynthesis. Catalyzes the initial step of the lipid cycle reactions in the biosynthesis of the cell wall peptidoglycan: transfers peptidoglycan precursor phospho-MurNAc-pentapeptide from UDP-MurNAc-pentapeptide onto the lipid carrier undecaprenyl phosphate, yielding undecaprenyl-pyrophosphoryl-MurNAc-pentapeptide, known as lipid I. The chain is Phospho-N-acetylmuramoyl-pentapeptide-transferase from Geobacter sp. (strain M21).